A 259-amino-acid polypeptide reads, in one-letter code: Imidazole glycerol phosphate synthase subunit HisF (259 aa).

Residues Asp11 and Asp130 contribute to the active site.

It belongs to the HisA/HisF family. As to quaternary structure, heterodimer of HisH and HisF.

Its subcellular location is the cytoplasm. It catalyses the reaction 5-[(5-phospho-1-deoxy-D-ribulos-1-ylimino)methylamino]-1-(5-phospho-beta-D-ribosyl)imidazole-4-carboxamide + L-glutamine = D-erythro-1-(imidazol-4-yl)glycerol 3-phosphate + 5-amino-1-(5-phospho-beta-D-ribosyl)imidazole-4-carboxamide + L-glutamate + H(+). It participates in amino-acid biosynthesis; L-histidine biosynthesis; L-histidine from 5-phospho-alpha-D-ribose 1-diphosphate: step 5/9. In terms of biological role, IGPS catalyzes the conversion of PRFAR and glutamine to IGP, AICAR and glutamate. The HisF subunit catalyzes the cyclization activity that produces IGP and AICAR from PRFAR using the ammonia provided by the HisH subunit. This chain is Imidazole glycerol phosphate synthase subunit HisF, found in Carboxydothermus hydrogenoformans (strain ATCC BAA-161 / DSM 6008 / Z-2901).